Reading from the N-terminus, the 74-residue chain is Large ribosomal subunit protein bL31 (74 aa).

Zn(2+)-binding residues include C16, C18, C38, and C41.

It belongs to the bacterial ribosomal protein bL31 family. Type A subfamily. In terms of assembly, part of the 50S ribosomal subunit. The cofactor is Zn(2+).

Binds the 23S rRNA. The polypeptide is Large ribosomal subunit protein bL31 (Mycolicibacterium vanbaalenii (strain DSM 7251 / JCM 13017 / BCRC 16820 / KCTC 9966 / NRRL B-24157 / PYR-1) (Mycobacterium vanbaalenii)).